A 204-amino-acid chain; its full sequence is Rho GDP-dissociation inhibitor 1 (204 aa).

The interval 1 to 36 is disordered; the sequence is MAEQEPTAEQLAQIAAENEEDEHSVNYKPPAQKSIQ. Ala2 bears the N-acetylalanine mark. The residue at position 34 (Ser34) is a Phosphoserine. Residue Lys43 is modified to N6-acetyllysine. A Phosphoserine modification is found at Ser47. An N6-acetyllysine mark is found at Lys105 and Lys127. Residues Lys138 and Lys141 each participate in a glycyl lysine isopeptide (Lys-Gly) (interchain with G-Cter in SUMO1); alternate cross-link. Glycyl lysine isopeptide (Lys-Gly) (interchain with G-Cter in SUMO2); alternate cross-links involve residues Lys138 and Lys141. Lys141 carries the N6-acetyllysine; alternate modification. Lys141 is subject to N6-succinyllysine; alternate. Lys178 carries the N6-acetyllysine modification.

The protein belongs to the Rho GDI family. In terms of assembly, monomer. Interacts with FER. Interacts with PLXNB3. Forms a heterodimer with RAC1. Interacts with RHOA, the affinity is increased by three orders of magnitude when RHOA is prenylated. Interacts with PSMD10; the interaction increases ARHGDIA association with RHOA, leading to ARHGDIA-mediated inactivation of RHOA and ROCK and prolonged AKT activation. Interacts with KANK2; the interaction is direct and may regulate the interaction of ARHGDIA with RHOA, RAC1 and CDC42. Interacts with RHOC. Interacts with CDC42. Interacts with NGFR (via death domain); NGFR binding decreases the affinity for RHOA.

Its subcellular location is the cytoplasm. Functionally, controls Rho proteins homeostasis. Regulates the GDP/GTP exchange reaction of the Rho proteins by inhibiting the dissociation of GDP from them, and the subsequent binding of GTP to them. Retains Rho proteins such as CDC42, RAC1 and RHOA in an inactive cytosolic pool, regulating their stability and protecting them from degradation. Actively involved in the recycling and distribution of activated Rho GTPases in the cell, mediates extraction from membranes of both inactive and activated molecules due its exceptionally high affinity for prenylated forms. Through the modulation of Rho proteins, may play a role in cell motility regulation. In glioma cells, inhibits cell migration and invasion by mediating the signals of SEMA5A and PLXNB3 that lead to inactivation of RAC1. In Homo sapiens (Human), this protein is Rho GDP-dissociation inhibitor 1 (ARHGDIA).